A 70-amino-acid polypeptide reads, in one-letter code: MLDPSTGWVLMSLSFSSSLHLMSIDTSQSLIIARASSRVIAGESLPCPGDTLDNLAFTVFPSADSEMDLI.

This is an uncharacterized protein from Vaccinia virus (strain Copenhagen) (VACV).